A 336-amino-acid chain; its full sequence is Flagellar filament 41 kDa core protein (336 aa).

Residues 208 to 236 form a disordered region; sequence AAPVQEGVQQEGAQQPAPATAPSQGGVNS. Low complexity predominate over residues 210 to 233; sequence PVQEGVQQEGAQQPAPATAPSQGG.

The protein belongs to the bacterial flagellin family. In terms of assembly, the flagellum consists of an outer layer composed of repeating units of FlaA around a core that contains several antigenically related polypeptides.

The protein localises to the periplasmic flagellum. It is found in the periplasm. Component of the core of the flagella. The sequence is that of Flagellar filament 41 kDa core protein (fla) from Borreliella burgdorferi (strain ATCC 35210 / DSM 4680 / CIP 102532 / B31) (Borrelia burgdorferi).